A 342-amino-acid polypeptide reads, in one-letter code: Phosphate acyltransferase (342 aa).

The protein belongs to the PlsX family. As to quaternary structure, homodimer. Probably interacts with PlsY.

Its subcellular location is the cytoplasm. It carries out the reaction a fatty acyl-[ACP] + phosphate = an acyl phosphate + holo-[ACP]. It functions in the pathway lipid metabolism; phospholipid metabolism. Its function is as follows. Catalyzes the reversible formation of acyl-phosphate (acyl-PO(4)) from acyl-[acyl-carrier-protein] (acyl-ACP). This enzyme utilizes acyl-ACP as fatty acyl donor, but not acyl-CoA. This chain is Phosphate acyltransferase, found in Actinobacillus succinogenes (strain ATCC 55618 / DSM 22257 / CCUG 43843 / 130Z).